The primary structure comprises 759 residues: Fidgetin (759 aa).

Disordered stretches follow at residues 89 to 111, 200 to 237, 258 to 293, and 337 to 429; these read SNYS…PWQP, SQAT…PGYN, VGSG…VPGY, and SYGQ…VMSE. Pro residues-rich tracts occupy residues 221-232 and 266-289; these read QPPPPPPPPPAL and GAPP…PPTT. Polar residues-rich tracts occupy residues 337-347 and 382-418; these read SYGQQRSTQSP and LMPS…SSES. T400 is subject to Phosphothreonine. ATP-binding positions include A489 and 529–534; that span reads GTGKTL.

This sequence belongs to the AAA ATPase family. As to quaternary structure, interacts with AKAP8 (via C-terminus). Widely expressed.

The protein resides in the nucleus matrix. Its subcellular location is the cytoplasm. It is found in the cytoskeleton. It localises to the microtubule organizing center. The protein localises to the centrosome. Its function is as follows. ATP-dependent microtubule severing protein. Severs microtubules along their length and depolymerizes their ends, primarily the minus-end, suppressing microtubule growth from and attachment to centrosomes. Microtubule severing may promote rapid reorganization of cellular microtubule arrays and the release of microtubules from the centrosome following nucleation. Microtubule release from the mitotic spindle poles may allow depolymerization of the microtubule end proximal to the spindle pole, leading to poleward microtubule flux and poleward motion of chromosome. This is Fidgetin (Fign) from Mus musculus (Mouse).